The sequence spans 190 residues: RING finger protein 227 (190 aa).

The segment at 18–81 (CNICYRPFNL…RRVVTCPFCR (64 aa)) adopts an RING-type zinc-finger fold. Residues 111 to 145 (KCERDEAGNPAKESSDADGEAEEEGESEKGAGPRS) are disordered. Over residues 126–136 (DADGEAEEEGE) the composition is skewed to acidic residues.

In Homo sapiens (Human), this protein is RING finger protein 227.